We begin with the raw amino-acid sequence, 313 residues long: MVDVIALGEPLIQFNSFNPGPLRFVNYFEKHVAGSELNFCIAVVRNHLSCSLIARVGNDEFGKNIIEYSRAQGIDTSHIKVDNESFTGIYFIQRGYPIPMKSELVYYRKGSAGSRLSPEDINENYVRNSRLVHSTGITLAISDNAKEAVIKAFELAKSRSLDTNIRPKLWSSLEKAKETILSILKKYDIEVLITDPDDTKILLDVTDPDEAYRKYKELGVKVLLYKLGSKGAIAYKDNVKAFKDAYKVPVEDPTGAGDAMAGTFVSLYLQGKDIEYSLAHGIAASTLVITVRGDNELTPTLEDAERFLNEFKT.

Substrate is bound by residues 34 to 38 (GSELN), Tyr90, 106 to 108 (YYR), and Arg166. ATP-binding positions include 164–166 (NIR), 226–231 (KLGSKG), and 255–258 (GAGD). Substrate is bound by residues Asp258 and Asp294. Asp258 serves as the catalytic Proton acceptor.

Homohexamer; trimer of dimers.

The enzyme catalyses 2-dehydro-3-deoxy-D-gluconate + ATP = 2-dehydro-3-deoxy-6-phospho-D-gluconate + ADP + H(+). It catalyses the reaction 2-dehydro-3-deoxy-D-galactonate + ATP = 2-dehydro-3-deoxy-6-phospho-D-galactonate + ADP + H(+). It functions in the pathway carbohydrate acid metabolism; 2-dehydro-3-deoxy-D-gluconate degradation; D-glyceraldehyde 3-phosphate and pyruvate from 2-dehydro-3-deoxy-D-gluconate: step 1/2. Functionally, involved in the degradation of glucose and galactose via the semi-phosphorylative Entner-Doudoroff pathway. Catalyzes the phosphorylation of 2-keto-3-deoxygluconate (KDG) and 2-keto-3-deoxygalactonate (KDGal) to produce 2-keto-3-deoxy-6-phosphogluconate (KDPG) and 2-keto-3-deoxy-6-phosphogalactonate (KDPGal), respectively. In Saccharolobus solfataricus (strain ATCC 35092 / DSM 1617 / JCM 11322 / P2) (Sulfolobus solfataricus), this protein is 2-dehydro-3-deoxygluconokinase/2-dehydro-3-deoxygalactonokinase (kdgK).